A 567-amino-acid chain; its full sequence is Proline--tRNA ligase (567 aa).

The protein belongs to the class-II aminoacyl-tRNA synthetase family. ProS type 1 subfamily. In terms of assembly, homodimer.

The protein resides in the cytoplasm. The enzyme catalyses tRNA(Pro) + L-proline + ATP = L-prolyl-tRNA(Pro) + AMP + diphosphate. Functionally, catalyzes the attachment of proline to tRNA(Pro) in a two-step reaction: proline is first activated by ATP to form Pro-AMP and then transferred to the acceptor end of tRNA(Pro). As ProRS can inadvertently accommodate and process non-cognate amino acids such as alanine and cysteine, to avoid such errors it has two additional distinct editing activities against alanine. One activity is designated as 'pretransfer' editing and involves the tRNA(Pro)-independent hydrolysis of activated Ala-AMP. The other activity is designated 'posttransfer' editing and involves deacylation of mischarged Ala-tRNA(Pro). The misacylated Cys-tRNA(Pro) is not edited by ProRS. This is Proline--tRNA ligase from Stenotrophomonas maltophilia (strain R551-3).